We begin with the raw amino-acid sequence, 387 residues long: 3-ketoacyl-CoA thiolase (387 aa).

The active-site Acyl-thioester intermediate is C91. Active-site proton acceptor residues include H343 and C373.

Belongs to the thiolase-like superfamily. Thiolase family. In terms of assembly, heterotetramer of two alpha chains (FadB) and two beta chains (FadA).

It is found in the cytoplasm. The enzyme catalyses an acyl-CoA + acetyl-CoA = a 3-oxoacyl-CoA + CoA. It participates in lipid metabolism; fatty acid beta-oxidation. Functionally, catalyzes the final step of fatty acid oxidation in which acetyl-CoA is released and the CoA ester of a fatty acid two carbons shorter is formed. The protein is 3-ketoacyl-CoA thiolase of Shewanella sp. (strain MR-4).